The chain runs to 356 residues: DNA polymerase IV (356 aa).

A UmuC domain is found at 7-188; that stretch reads IIHIDMDAFY…IPVTKFYGVG (182 aa). Mg(2+)-binding residues include aspartate 11 and aspartate 106. The active site involves glutamate 107.

This sequence belongs to the DNA polymerase type-Y family. As to quaternary structure, monomer. It depends on Mg(2+) as a cofactor.

Its subcellular location is the cytoplasm. It carries out the reaction DNA(n) + a 2'-deoxyribonucleoside 5'-triphosphate = DNA(n+1) + diphosphate. Its function is as follows. Poorly processive, error-prone DNA polymerase involved in untargeted mutagenesis. Copies undamaged DNA at stalled replication forks, which arise in vivo from mismatched or misaligned primer ends. These misaligned primers can be extended by PolIV. Exhibits no 3'-5' exonuclease (proofreading) activity. May be involved in translesional synthesis, in conjunction with the beta clamp from PolIII. In Listeria welshimeri serovar 6b (strain ATCC 35897 / DSM 20650 / CCUG 15529 / CIP 8149 / NCTC 11857 / SLCC 5334 / V8), this protein is DNA polymerase IV.